A 118-amino-acid polypeptide reads, in one-letter code: Non-specific lipid-transfer protein 2 (118 aa).

An N-terminal signal peptide occupies residues 1–25 (MAGVMKLACMVLACMIVAGPITANA). Disulfide bonds link cysteine 29–cysteine 76, cysteine 39–cysteine 53, cysteine 54–cysteine 100, and cysteine 74–cysteine 114.

Belongs to the plant LTP family.

In terms of biological role, plant non-specific lipid-transfer proteins transfer phospholipids as well as galactolipids across membranes. May play a role in wax or cutin deposition in the cell walls of expanding epidermal cells and certain secretory tissues. This is Non-specific lipid-transfer protein 2 (LTP2) from Arabidopsis thaliana (Mouse-ear cress).